The following is a 968-amino-acid chain: RNA polymerase-associated protein RapA (968 aa).

A Helicase ATP-binding domain is found at 164 to 334 (EVGQRHAPRV…FARLRLLDPN (171 aa)). ATP is bound at residue 177–184 (DEVGLGKT). Positions 280–283 (DEAH) match the DEAH box motif. The Helicase C-terminal domain maps to 493-644 (WLVDFLLDLR…TCPTGRALYD (152 aa)).

The protein belongs to the SNF2/RAD54 helicase family. RapA subfamily. Interacts with the RNAP. Has a higher affinity for the core RNAP than for the holoenzyme. Its ATPase activity is stimulated by binding to RNAP.

Transcription regulator that activates transcription by stimulating RNA polymerase (RNAP) recycling in case of stress conditions such as supercoiled DNA or high salt concentrations. Probably acts by releasing the RNAP, when it is trapped or immobilized on tightly supercoiled DNA. Does not activate transcription on linear DNA. Probably not involved in DNA repair. The polypeptide is RNA polymerase-associated protein RapA (Sodalis glossinidius (strain morsitans)).